The chain runs to 359 residues: Peptide chain release factor 1 (359 aa).

The residue at position 236 (Q236) is an N5-methylglutamine.

Belongs to the prokaryotic/mitochondrial release factor family. Post-translationally, methylated by PrmC. Methylation increases the termination efficiency of RF1.

It localises to the cytoplasm. Peptide chain release factor 1 directs the termination of translation in response to the peptide chain termination codons UAG and UAA. The protein is Peptide chain release factor 1 of Streptococcus pneumoniae serotype 19F (strain G54).